Reading from the N-terminus, the 355-residue chain is Peptide chain release factor 1 (355 aa).

Glutamine 233 carries the post-translational modification N5-methylglutamine.

This sequence belongs to the prokaryotic/mitochondrial release factor family. Post-translationally, methylated by PrmC. Methylation increases the termination efficiency of RF1.

The protein localises to the cytoplasm. Its function is as follows. Peptide chain release factor 1 directs the termination of translation in response to the peptide chain termination codons UAG and UAA. The protein is Peptide chain release factor 1 of Desulfitobacterium hafniense (strain DSM 10664 / DCB-2).